Reading from the N-terminus, the 666-residue chain is Zinc finger protein 710 (666 aa).

Glycyl lysine isopeptide (Lys-Gly) (interchain with G-Cter in SUMO2) cross-links involve residues K110 and K113. Residues K113–A141 are disordered. 3 consecutive C2H2-type zinc fingers follow at residues W297–H319, H325–H347, and H353–H375. K379 is covalently cross-linked (Glycyl lysine isopeptide (Lys-Gly) (interchain with G-Cter in SUMO2)). 8 C2H2-type zinc fingers span residues Y381 to H403, H409 to H431, Y437 to H459, F465 to H487, F493 to H515, Y521 to H543, F549 to H571, and F577 to H600.

It belongs to the krueppel C2H2-type zinc-finger protein family.

It is found in the nucleus. Functionally, may be involved in transcriptional regulation. The protein is Zinc finger protein 710 (Znf710) of Mus musculus (Mouse).